The chain runs to 418 residues: Thyroid hormone receptor alpha-B (418 aa).

Residues 1–40 (MDQNLSGLDCLSEPDEKRWPDGKRKRKNSQCMGKSGMSGD) are disordered. Residues 1–60 (MDQNLSGLDCLSEPDEKRWPDGKRKRKNSQCMGKSGMSGDSLVSLPPAGYIPSYLDKDEP) are modulating. 2 NR C4-type zinc fingers span residues 61–81 (CVVC…CEGC) and 99–123 (CKYD…FKKC). The nuclear receptor DNA-binding region spans 61–128 (CVVCSDKATG…RFKKCIAVGM (68 aa)). In terms of domain architecture, NR LBD spans 171-415 (EEWELIRIVT…PPLFLEVFED (245 aa)).

This sequence belongs to the nuclear hormone receptor family. NR1 subfamily. As to quaternary structure, binds to thyroid hormone receptor element (TRE) weakly as homodimers and monomers, but binds TRE with much higher affinity as heterodimers with retinoid X receptors. Can bind DNA as a heterodimer with either rxra or rxrg.

Its subcellular location is the nucleus. Functionally, high affinity receptor for triiodothyronine (T3). This is Thyroid hormone receptor alpha-B (thra-b) from Xenopus laevis (African clawed frog).